We begin with the raw amino-acid sequence, 273 residues long: Ribosomal RNA small subunit methyltransferase A (273 aa).

S-adenosyl-L-methionine contacts are provided by Asn-20, Leu-22, Gly-47, Glu-68, Asp-90, and Asn-110.

The protein belongs to the class I-like SAM-binding methyltransferase superfamily. rRNA adenine N(6)-methyltransferase family. RsmA subfamily.

It is found in the cytoplasm. The catalysed reaction is adenosine(1518)/adenosine(1519) in 16S rRNA + 4 S-adenosyl-L-methionine = N(6)-dimethyladenosine(1518)/N(6)-dimethyladenosine(1519) in 16S rRNA + 4 S-adenosyl-L-homocysteine + 4 H(+). Specifically dimethylates two adjacent adenosines (A1518 and A1519) in the loop of a conserved hairpin near the 3'-end of 16S rRNA in the 30S particle. May play a critical role in biogenesis of 30S subunits. This is Ribosomal RNA small subunit methyltransferase A from Chlorobium luteolum (strain DSM 273 / BCRC 81028 / 2530) (Pelodictyon luteolum).